Here is a 567-residue protein sequence, read N- to C-terminus: UPF0313 protein Tpet_0582 (567 aa).

In terms of domain architecture, Radical SAM core spans 288 to 560 (KAIETVKFSI…NKMKENVLFK (273 aa)). [4Fe-4S] cluster contacts are provided by Cys303, Cys307, and Cys310.

This sequence belongs to the UPF0313 family. Requires [4Fe-4S] cluster as cofactor.

This chain is UPF0313 protein Tpet_0582, found in Thermotoga petrophila (strain ATCC BAA-488 / DSM 13995 / JCM 10881 / RKU-1).